A 1087-amino-acid chain; its full sequence is Alpha-mannosidase G (1087 aa).

Zn(2+) contacts are provided by His-264, Asp-266, Asp-376, and His-579. Residue Asp-376 is the Nucleophile of the active site.

This sequence belongs to the glycosyl hydrolase 38 family. Zn(2+) is required as a cofactor.

It catalyses the reaction Hydrolysis of terminal, non-reducing alpha-D-mannose residues in alpha-D-mannosides.. The polypeptide is Alpha-mannosidase G (manG) (Dictyostelium discoideum (Social amoeba)).